The primary structure comprises 1104 residues: MTSSGKVRIYELSKDLGLENKDVLDAAEKLSIAAKSHSSSISDAEAGKIRSLLGKGGNGAKPAAAAPAKPAPGKAILSVKKAAPATPSKPTPAVSKPVAKPVAAKPVVTKPAAAVKPQAAPKPPAAATPKPVISKPAPALVKAAAAPARPTAAKPVPRPAAAKPQVVSKPAAGKPKLVSKPKATAKPTAPTPRPTPARPTPRPAGAGSPARPTPGQGQPKPQIIRSGAPSRPGAPTRAGAPAKPGAPSRPTPRPELVGKPVPRRPAGTGVPQRQGGPSRPGAPTRQGRPGMPPRSGNTLELVGKPIRRDGSTTGSGRPGAPTRPGAPGRPGMPAGMRKPVAPGELMQLQKPVGRPAAPAPRRPDAPTKAGAGAGTATPPVARPNSPSAPRRPSFRPGGPGGQRRPGRPDWDDSARLDALRSRSPQKQRQKVHIIGENDDSLAAQTGGFAGEQENMVLSASLARPAKPKSQQRTAPKPVAAMRKRKKETARQRQRRRAMELRAAREAKQVRPEMIVVPEDNLTVQELADMLSVESSEIIKSLFFKGIIATVTQTLDMPTIEAVADEFGVPVLQDDVEEAAKKTVEMIEEADKAHLIRRPPVVTVMGHVDHGKTSLLDAIRQARVAAGEAGGITQHIGAYQVEIEHNNEQRKLTFLDTPGHEAFTAMRARGTKVTDVAVLVVAADDGVRPQTLEAISHARAAEVPIVVAINKIDKEGSSPERVKQELSEQNLLAEDWGGDVVMVPVSAIKGENIDKLLEMLLLVTEVEDLQANPDRLARGTVIEAHLDKAKGPVATLLVQNGTLKTGDVLAAGPVLGKVRAMVDDNRQRLKQAGPSFAVEALGFSEVPTAGDEFEVYPDEKSARAVVGDRASDARATRLAQQMASRRVSLTAMSGQANDGELKELNLILKADVQGSVEAILGSLEQLPKDEVQVRVLLSAPGEITETDVDLAAASGAVIVGFNTSMASGAKKAADATGVDVRDYDVIYKLLEDIQMAMEGLLEPELVEEALGEAEVRAVFTIGKSAVAGCYVTTGKLHRNCRVRVHRGKQVVYEGDLDSLRRNKDDVKEVATGFECGVGTDRFANWEEGDRIEAFKMVTQRRKLTT.

Disordered regions lie at residues 51–444 and 461–497; these read SLLG…LAAQ and LARPAKPKSQQRTAPKPVAAMRKRKKETARQRQRRRA. Low complexity-rich tracts occupy residues 60-119 and 127-164; these read AKPA…KPQA and ATPKPVISKPAPALVKAAAAPARPTAAKPVPRPAAAKP. Pro residues predominate over residues 189-202; it reads APTPRPTPARPTPR. Low complexity-rich tracts occupy residues 203–215, 227–246, 311–336, and 366–396; these read PAGAGSPARPTPG, GAPSRPGAPTRAGAPAKPGA, STTGSGRPGAPTRPGAPGRPGMPAGM, and PTKAGAGAGTATPPVARPNSPSAPRRPSFRP. Residues 406 to 420 show a composition bias toward basic and acidic residues; that stretch reads GRPDWDDSARLDALR. The span at 481–495 shows a compositional bias: basic residues; it reads MRKRKKETARQRQRR. The tr-type G domain occupies 596 to 768; it reads RRPPVVTVMG…LLLVTEVEDL (173 aa). The G1 stretch occupies residues 605–612; that stretch reads GHVDHGKT. 605-612 provides a ligand contact to GTP; the sequence is GHVDHGKT. The interval 630–634 is G2; that stretch reads GITQH. The tract at residues 655 to 658 is G3; that stretch reads DTPG. GTP contacts are provided by residues 655-659 and 709-712; these read DTPGH and NKID. The G4 stretch occupies residues 709 to 712; it reads NKID. Residues 745–747 form a G5 region; that stretch reads SAI.

This sequence belongs to the TRAFAC class translation factor GTPase superfamily. Classic translation factor GTPase family. IF-2 subfamily.

The protein resides in the cytoplasm. In terms of biological role, one of the essential components for the initiation of protein synthesis. Protects formylmethionyl-tRNA from spontaneous hydrolysis and promotes its binding to the 30S ribosomal subunits. Also involved in the hydrolysis of GTP during the formation of the 70S ribosomal complex. This Synechococcus sp. (strain CC9605) protein is Translation initiation factor IF-2.